A 930-amino-acid chain; its full sequence is Translation initiation factor IF-2 (930 aa).

Positions 29 to 316 (GEFVKSASST…GRKSKRAKRA (288 aa)) are disordered. Residues 81–120 (RPGPKPGPPVAQQPAAPAAPPAAPPAPPTPAAAPPSPAPA) are compositionally biased toward pro residues. Residues 121-135 (APAAATPAEPAAPSA) are compositionally biased toward low complexity. Pro residues-rich tracts occupy residues 136-155 (RPGP…PGAP) and 180-191 (PRPQGPGGPRPG). Residues 192–204 (PGAGGPRPGGGPR) are compositionally biased toward gly residues. Residues 228–240 (GGGPRPGGGPRPT) show a composition bias toward pro residues. Gly residues predominate over residues 241 to 301 (PGGAGRPGGG…GAAGAFGRPG (61 aa)). Basic residues predominate over residues 305 to 314 (KRGRKSKRAK). Residues 426-598 (IRPPVVTVMG…VILTADASLD (173 aa)) form the tr-type G domain. Residues 435 to 442 (GHVDHGKT) are G1. A GTP-binding site is contributed by 435 to 442 (GHVDHGKT). The interval 460–464 (GITQH) is G2. The G3 stretch occupies residues 485-488 (DTPG). GTP is bound by residues 485–489 (DTPGH) and 539–542 (NKID). The segment at 539–542 (NKID) is G4. The segment at 575 to 577 (SAK) is G5.

The protein belongs to the TRAFAC class translation factor GTPase superfamily. Classic translation factor GTPase family. IF-2 subfamily.

Its subcellular location is the cytoplasm. In terms of biological role, one of the essential components for the initiation of protein synthesis. Protects formylmethionyl-tRNA from spontaneous hydrolysis and promotes its binding to the 30S ribosomal subunits. Also involved in the hydrolysis of GTP during the formation of the 70S ribosomal complex. This Mycolicibacterium vanbaalenii (strain DSM 7251 / JCM 13017 / BCRC 16820 / KCTC 9966 / NRRL B-24157 / PYR-1) (Mycobacterium vanbaalenii) protein is Translation initiation factor IF-2.